The chain runs to 226 residues: ATP synthase F(0) complex subunit a (226 aa).

6 helical membrane-spanning segments follow: residues proline 12–proline 32, tryptophan 68–leucine 88, glutamine 97–leucine 117, isoleucine 138–valine 158, leucine 182–leucine 202, and glutamate 203–histidine 223.

Belongs to the ATPase A chain family. As to quaternary structure, component of the ATP synthase complex composed at least of ATP5F1A/subunit alpha, ATP5F1B/subunit beta, ATP5MC1/subunit c (homooctomer), MT-ATP6/subunit a, MT-ATP8/subunit 8, ATP5ME/subunit e, ATP5MF/subunit f, ATP5MG/subunit g, ATP5MK/subunit k, ATP5MJ/subunit j, ATP5F1C/subunit gamma, ATP5F1D/subunit delta, ATP5F1E/subunit epsilon, ATP5PF/subunit F6, ATP5PB/subunit b, ATP5PD/subunit d, ATP5PO/subunit OSCP. ATP synthase complex consists of a soluble F(1) head domain (subunits alpha(3) and beta(3)) - the catalytic core - and a membrane F(0) domain - the membrane proton channel (subunits c, a, 8, e, f, g, k and j). These two domains are linked by a central stalk (subunits gamma, delta, and epsilon) rotating inside the F1 region and a stationary peripheral stalk (subunits F6, b, d, and OSCP). Interacts with DNAJC30; interaction is direct.

The protein resides in the mitochondrion inner membrane. The catalysed reaction is H(+)(in) = H(+)(out). Subunit a, of the mitochondrial membrane ATP synthase complex (F(1)F(0) ATP synthase or Complex V) that produces ATP from ADP in the presence of a proton gradient across the membrane which is generated by electron transport complexes of the respiratory chain. ATP synthase complex consist of a soluble F(1) head domain - the catalytic core - and a membrane F(1) domain - the membrane proton channel. These two domains are linked by a central stalk rotating inside the F(1) region and a stationary peripheral stalk. During catalysis, ATP synthesis in the catalytic domain of F(1) is coupled via a rotary mechanism of the central stalk subunits to proton translocation. With the subunit c (ATP5MC1), forms the proton-conducting channel in the F(0) domain, that contains two crucial half-channels (inlet and outlet) that facilitate proton movement from the mitochondrial intermembrane space (IMS) into the matrix. Protons are taken up via the inlet half-channel and released through the outlet half-channel, following a Grotthuss mechanism. In Pongo abelii (Sumatran orangutan), this protein is ATP synthase F(0) complex subunit a.